A 777-amino-acid polypeptide reads, in one-letter code: DNA repair helicase/translocase XPB-R (777 aa).

Residues 212-416 (AASDGALRSG…DLFHLVGPKL (205 aa)) form the Helicase ATP-binding domain. 225 to 232 (LPCGSGKT) contributes to the ATP binding site. Residues 369–372 (DEVH) carry the DEVH box motif. A Helicase C-terminal domain is found at 484-631 (IVKRHVAESS…GYTCSVTEFN (148 aa)).

Belongs to the helicase family. RAD25/XPB subfamily.

It catalyses the reaction Couples ATP hydrolysis with the unwinding of duplex DNA by translocating in the 3'-5' direction.. The catalysed reaction is ATP + H2O = ADP + phosphate + H(+). Its function is as follows. ATP-dependent 3'-5' DNA helicase/translocase; binds dsDNA rather than ssDNA, unzipping it in a translocase rather than classical helicase activity. Involved in nucleotide excision repair (NER) of damaged DNA. XPB-R is a paralog of XBP, but is not a component of the TFIIH basal transcription factor and is dispensable for RNA polymerase II transcription. This Trypanosoma brucei brucei (strain 927/4 GUTat10.1) protein is DNA repair helicase/translocase XPB-R.